Here is a 194-residue protein sequence, read N- to C-terminus: Ribonuclease HII (194 aa).

The RNase H type-2 domain maps to 3–193 (ILTAGVDEAG…VRNLLAQQTL (191 aa)). A divalent metal cation-binding residues include D9, E10, and D101.

It belongs to the RNase HII family. It depends on Mn(2+) as a cofactor. The cofactor is Mg(2+).

It is found in the cytoplasm. The enzyme catalyses Endonucleolytic cleavage to 5'-phosphomonoester.. Endonuclease that specifically degrades the RNA of RNA-DNA hybrids. The polypeptide is Ribonuclease HII (Neisseria meningitidis serogroup C (strain 053442)).